A 448-amino-acid chain; its full sequence is Probable D-serine dehydratase (448 aa).

Lysine 111 carries the N6-(pyridoxal phosphate)lysine modification.

Belongs to the serine/threonine dehydratase family. DsdA subfamily. Pyridoxal 5'-phosphate serves as cofactor.

The catalysed reaction is D-serine = pyruvate + NH4(+). The sequence is that of Probable D-serine dehydratase from Rhizobium etli (strain CIAT 652).